We begin with the raw amino-acid sequence, 283 residues long: Urease accessory protein UreD (283 aa).

A disordered region spans residues 1 to 21 (MTQTQPVGTLRLTIDDQGPQG).

Belongs to the UreD family. As to quaternary structure, ureD, UreF and UreG form a complex that acts as a GTP-hydrolysis-dependent molecular chaperone, activating the urease apoprotein by helping to assemble the nickel containing metallocenter of UreC. The UreE protein probably delivers the nickel.

The protein localises to the cytoplasm. Probably acts in the maturation of urease via the functional incorporation of the urease nickel metallocenter. Required for urease expression. This chain is Urease accessory protein UreD, found in Corynebacterium glutamicum (strain ATCC 13032 / DSM 20300 / JCM 1318 / BCRC 11384 / CCUG 27702 / LMG 3730 / NBRC 12168 / NCIMB 10025 / NRRL B-2784 / 534).